Consider the following 282-residue polypeptide: Farnesyl diphosphate synthase (282 aa).

Residues Lys45, Arg48, and His77 each contribute to the isopentenyl diphosphate site. Positions 84 and 90 each coordinate Mg(2+). Arg95 contributes to the (2E)-geranyl diphosphate binding site. Arg96 serves as a coordination point for isopentenyl diphosphate. The (2E)-geranyl diphosphate site is built by Lys181, Thr182, and Gln220.

It belongs to the FPP/GGPP synthase family. Mg(2+) serves as cofactor.

The protein localises to the cytoplasm. The enzyme catalyses isopentenyl diphosphate + (2E)-geranyl diphosphate = (2E,6E)-farnesyl diphosphate + diphosphate. The sequence is that of Farnesyl diphosphate synthase (ispA) from Buchnera aphidicola subsp. Acyrthosiphon pisum (strain APS) (Acyrthosiphon pisum symbiotic bacterium).